A 209-amino-acid polypeptide reads, in one-letter code: MANKKRSASSSRWLQEHFSDKYVQQAKKKGFRSRAWFKLEEIQQSDNIFKPGMTVVDLGAAPGGWSQYVVQQLGNKGRIIACDLLPMDPIVGVDFLQGDFRDELVLKALLDRVGDNKVQVVMSDMAPNMSGTPAVDIPRSMYLVELALDMCRDVLAPGGSFIVKVFQGEGFDEYLGQIRSLFTKVKVRKPDASRSRSREVYIVATGRKL.

S-adenosyl-L-methionine-binding residues include Gly63, Trp65, Asp83, Asp99, and Asp124. Catalysis depends on Lys164, which acts as the Proton acceptor.

The protein belongs to the class I-like SAM-binding methyltransferase superfamily. RNA methyltransferase RlmE family.

The protein resides in the cytoplasm. It carries out the reaction uridine(2552) in 23S rRNA + S-adenosyl-L-methionine = 2'-O-methyluridine(2552) in 23S rRNA + S-adenosyl-L-homocysteine + H(+). Specifically methylates the uridine in position 2552 of 23S rRNA at the 2'-O position of the ribose in the fully assembled 50S ribosomal subunit. This chain is Ribosomal RNA large subunit methyltransferase E, found in Proteus mirabilis (strain HI4320).